A 142-amino-acid polypeptide reads, in one-letter code: Ovocleidin-17 (142 aa).

3 disulfides stabilise this stretch: cysteine 5–cysteine 16, cysteine 33–cysteine 138, and cysteine 113–cysteine 130. The 128-residue stretch at 12–139 (TPGGCLGFFS…CTERNAFVCK (128 aa)) folds into the C-type lectin domain. N-linked (GlcNAc...) asparagine glycosylation is present at asparagine 59. A phosphoserine mark is found at serine 61 and serine 67.

In terms of tissue distribution, expressed in the shell gland mucosa. Not detected in hen liver, magnum, isthmus, cartilage, bone or in egg white or yolk.

Its subcellular location is the secreted. The protein localises to the extracellular space. It localises to the extracellular matrix. Its function is as follows. May form proteinaceous networks during the construction of the eggshell which then may control the deposition of the mineral phase. The protein is Ovocleidin-17 of Gallus gallus (Chicken).